The primary structure comprises 435 residues: RuBisCO large subunit-binding protein subunit beta-1 (435 aa).

The protein belongs to the chaperonin (HSP60) family. In terms of assembly, oligomer of probably six alpha and six beta subunits.

The protein localises to the plastid. Its subcellular location is the chloroplast. Functionally, this protein binds RuBisCO small and large subunits and is implicated in the assembly of the enzyme oligomer. This is RuBisCO large subunit-binding protein subunit beta-1 from Chlamydomonas reinhardtii (Chlamydomonas smithii).